Reading from the N-terminus, the 455-residue chain is SVGFKAGVKDYKLTYYTPDYETKDTDILAAFRVTPQPGVPPEEAGAAVAAESSTGTWTTVWTDGLTSLDRYKGRCYHIEPVAGEENQFIAYVAYPLDLFEEGSVTNMFTSIVGNVFGFKALRALRLEDLRIPTAYTKTFQGPPHGIQVERDKLNKYGRPLLGCTIKPKLGLSAKNYGRAVYECLRGGLDFTKDDENVNSQPFMRWRDRFLFCAEALFKAQAETGEIKGHYLNATAGTCEEMMKRAMCARELGVPIVMHDYLTGGFTANTTLAHYCRDNGLLLHIHRAMHAVIDRQKNHGMHFRVLAKALRLSGGDHIHAGTVVGKLEGEREITLGFVDLLRDDYVEKDRSRGIYFTQDWVSLPGVIPVASGGIHVWHMPALTEIFGDDSVLQFGGGTLGHPWGNAPGAVANRVALEACVQARNEGRDLAREGNEIIREASKWSPELAAACEVWKE.

The residue at position 5 (K5) is an N6,N6,N6-trimethyllysine. 2 residues coordinate substrate: N114 and T164. K166 serves as the catalytic Proton acceptor. A substrate-binding site is contributed by K168. Residues K192, D194, and E195 each coordinate Mg(2+). Residue K192 is modified to N6-carboxylysine. Residue H285 is the Proton acceptor of the active site. Positions 286, 318, and 370 each coordinate substrate.

It belongs to the RuBisCO large chain family. Type I subfamily. In terms of assembly, heterohexadecamer of 8 large chains and 8 small chains; disulfide-linked. The disulfide link is formed within the large subunit homodimers. Mg(2+) is required as a cofactor. The disulfide bond which can form in the large chain dimeric partners within the hexadecamer appears to be associated with oxidative stress and protein turnover.

The protein resides in the plastid. It localises to the chloroplast. The catalysed reaction is 2 (2R)-3-phosphoglycerate + 2 H(+) = D-ribulose 1,5-bisphosphate + CO2 + H2O. It catalyses the reaction D-ribulose 1,5-bisphosphate + O2 = 2-phosphoglycolate + (2R)-3-phosphoglycerate + 2 H(+). Functionally, ruBisCO catalyzes two reactions: the carboxylation of D-ribulose 1,5-bisphosphate, the primary event in carbon dioxide fixation, as well as the oxidative fragmentation of the pentose substrate in the photorespiration process. Both reactions occur simultaneously and in competition at the same active site. The protein is Ribulose bisphosphate carboxylase large chain of Vachellia farnesiana (Sweet acacia).